The primary structure comprises 279 residues: 4-hydroxy-3-methylbut-2-enyl diphosphate reductase (279 aa).

[4Fe-4S] cluster is bound at residue C12. Positions 41 and 74 each coordinate (2E)-4-hydroxy-3-methylbut-2-enyl diphosphate. 2 residues coordinate dimethylallyl diphosphate: H41 and H74. H41 and H74 together coordinate isopentenyl diphosphate. [4Fe-4S] cluster is bound at residue C96. Residue H124 participates in (2E)-4-hydroxy-3-methylbut-2-enyl diphosphate binding. H124 is a binding site for dimethylallyl diphosphate. H124 contacts isopentenyl diphosphate. E126 serves as the catalytic Proton donor. T164 serves as a coordination point for (2E)-4-hydroxy-3-methylbut-2-enyl diphosphate. C192 provides a ligand contact to [4Fe-4S] cluster. Positions 220, 221, 222, and 263 each coordinate (2E)-4-hydroxy-3-methylbut-2-enyl diphosphate. 4 residues coordinate dimethylallyl diphosphate: S220, S221, N222, and S263. Positions 220, 221, 222, and 263 each coordinate isopentenyl diphosphate.

This sequence belongs to the IspH family. It depends on [4Fe-4S] cluster as a cofactor.

It carries out the reaction isopentenyl diphosphate + 2 oxidized [2Fe-2S]-[ferredoxin] + H2O = (2E)-4-hydroxy-3-methylbut-2-enyl diphosphate + 2 reduced [2Fe-2S]-[ferredoxin] + 2 H(+). The enzyme catalyses dimethylallyl diphosphate + 2 oxidized [2Fe-2S]-[ferredoxin] + H2O = (2E)-4-hydroxy-3-methylbut-2-enyl diphosphate + 2 reduced [2Fe-2S]-[ferredoxin] + 2 H(+). It functions in the pathway isoprenoid biosynthesis; dimethylallyl diphosphate biosynthesis; dimethylallyl diphosphate from (2E)-4-hydroxy-3-methylbutenyl diphosphate: step 1/1. Its pathway is isoprenoid biosynthesis; isopentenyl diphosphate biosynthesis via DXP pathway; isopentenyl diphosphate from 1-deoxy-D-xylulose 5-phosphate: step 6/6. Catalyzes the conversion of 1-hydroxy-2-methyl-2-(E)-butenyl 4-diphosphate (HMBPP) into a mixture of isopentenyl diphosphate (IPP) and dimethylallyl diphosphate (DMAPP). Acts in the terminal step of the DOXP/MEP pathway for isoprenoid precursor biosynthesis. The sequence is that of 4-hydroxy-3-methylbut-2-enyl diphosphate reductase from Clostridioides difficile (strain 630) (Peptoclostridium difficile).